The sequence spans 230 residues: Acyl-protein thioesterase 1 (230 aa).

Active-site charge relay system residues include serine 119, aspartate 174, and histidine 208. Lysine 224 is modified (N6-acetyllysine).

This sequence belongs to the AB hydrolase superfamily. AB hydrolase 2 family. Homodimer. Platelets.

It is found in the cytoplasm. The protein localises to the cell membrane. The protein resides in the nucleus membrane. It localises to the endoplasmic reticulum. The catalysed reaction is S-hexadecanoyl-L-cysteinyl-[protein] + H2O = L-cysteinyl-[protein] + hexadecanoate + H(+). It catalyses the reaction 1-hexadecanoyl-sn-glycero-3-phosphocholine + H2O = sn-glycerol 3-phosphocholine + hexadecanoate + H(+). It carries out the reaction a 1-(9Z-octadecenoyl)-2-acyl-sn-glycero-3-phosphocholine + H2O = a 2-acyl-sn-glycero-3-phosphocholine + (9Z)-octadecenoate + H(+). Inhibited by palmostatin-B, leading to impair depalmitoylating of Ras. In terms of biological role, acts as an acyl-protein thioesterase. Hydrolyzes fatty acids from S-acylated cysteine residues in proteins such as trimeric G alpha proteins or HRAS. Acts as a palmitoyl thioesterase that catalyzes depalmitoylation of proteins, such as ADRB2, KCNMA1 and SQSTM1. Acts as a negative regulator of autophagy by mediating palmitoylation of SQSTM1, decreasing affinity between SQSTM1 and ATG8 proteins and recruitment of ubiquitinated cargo proteins to autophagosomes. Acts as a lysophospholipase and hydrolyzes lysophosphatidylcholine (lyso-PC). Also hydrolyzes lysophosphatidylethanolamine (lyso-PE), lysophosphatidylinositol (lyso-PI) and lysophosphatidylserine (lyso-PS). Has much higher thioesterase activity than lysophospholipase activity. Contributes to the production of lysophosphatidic acid (LPA) during blood coagulation by recognizing and cleaving plasma phospholipids to generate lysophospholipids which in turn act as substrates for ENPP2 to produce LPA. The polypeptide is Acyl-protein thioesterase 1 (LYPLA1) (Homo sapiens (Human)).